A 138-amino-acid polypeptide reads, in one-letter code: Putative pre-16S rRNA nuclease (138 aa).

Belongs to the YqgF nuclease family.

It is found in the cytoplasm. Could be a nuclease involved in processing of the 5'-end of pre-16S rRNA. The chain is Putative pre-16S rRNA nuclease from Bacillus pumilus (strain SAFR-032).